The chain runs to 526 residues: Glutamate--cysteine ligase (526 aa).

It belongs to the glutamate--cysteine ligase type 1 family. Type 1 subfamily.

The catalysed reaction is L-cysteine + L-glutamate + ATP = gamma-L-glutamyl-L-cysteine + ADP + phosphate + H(+). It participates in sulfur metabolism; glutathione biosynthesis; glutathione from L-cysteine and L-glutamate: step 1/2. This Shewanella amazonensis (strain ATCC BAA-1098 / SB2B) protein is Glutamate--cysteine ligase.